A 314-amino-acid polypeptide reads, in one-letter code: Methionyl-tRNA formyltransferase (314 aa).

Position 113-116 (113-116) interacts with (6S)-5,6,7,8-tetrahydrofolate; that stretch reads SLLP.

Belongs to the Fmt family.

The enzyme catalyses L-methionyl-tRNA(fMet) + (6R)-10-formyltetrahydrofolate = N-formyl-L-methionyl-tRNA(fMet) + (6S)-5,6,7,8-tetrahydrofolate + H(+). Its function is as follows. Attaches a formyl group to the free amino group of methionyl-tRNA(fMet). The formyl group appears to play a dual role in the initiator identity of N-formylmethionyl-tRNA by promoting its recognition by IF2 and preventing the misappropriation of this tRNA by the elongation apparatus. This chain is Methionyl-tRNA formyltransferase, found in Pseudomonas aeruginosa (strain LESB58).